Consider the following 436-residue polypeptide: Histidine--tRNA ligase (436 aa).

It belongs to the class-II aminoacyl-tRNA synthetase family.

The protein resides in the cytoplasm. It carries out the reaction tRNA(His) + L-histidine + ATP = L-histidyl-tRNA(His) + AMP + diphosphate + H(+). The sequence is that of Histidine--tRNA ligase from Thermococcus kodakarensis (strain ATCC BAA-918 / JCM 12380 / KOD1) (Pyrococcus kodakaraensis (strain KOD1)).